Consider the following 106-residue polypeptide: ATP-dependent Clp protease adapter protein ClpS (106 aa).

This sequence belongs to the ClpS family. Binds to the N-terminal domain of the chaperone ClpA.

Functionally, involved in the modulation of the specificity of the ClpAP-mediated ATP-dependent protein degradation. This chain is ATP-dependent Clp protease adapter protein ClpS, found in Vibrio vulnificus (strain CMCP6).